The chain runs to 375 residues: Lipid-A-disaccharide synthase (375 aa).

This sequence belongs to the LpxB family.

The enzyme catalyses a lipid X + a UDP-2-N,3-O-bis[(3R)-3-hydroxyacyl]-alpha-D-glucosamine = a lipid A disaccharide + UDP + H(+). It functions in the pathway bacterial outer membrane biogenesis; LPS lipid A biosynthesis. Condensation of UDP-2,3-diacylglucosamine and 2,3-diacylglucosamine-1-phosphate to form lipid A disaccharide, a precursor of lipid A, a phosphorylated glycolipid that anchors the lipopolysaccharide to the outer membrane of the cell. This is Lipid-A-disaccharide synthase from Pseudomonas putida (strain ATCC 47054 / DSM 6125 / CFBP 8728 / NCIMB 11950 / KT2440).